Consider the following 392-residue polypeptide: Riboflavin biosynthesis protein PYRD, chloroplastic (392 aa).

The N-terminal 26 residues, 1-26 (MASSLVSRPHLTQRPVRAATLASATR), are a transit peptide targeting the chloroplast. A CMP/dCMP-type deaminase domain is found at 46-168 (LDDAHYMRRC…KLQGAGISVR (123 aa)). Histidine 95 lines the Zn(2+) pocket. Glutamate 97 serves as the catalytic Proton donor. Residues cysteine 120 and cysteine 129 each coordinate Zn(2+).

It depends on Zn(2+) as a cofactor.

The protein localises to the plastid. The protein resides in the chloroplast. The catalysed reaction is 2,5-diamino-6-hydroxy-4-(5-phosphoribosylamino)-pyrimidine + H2O + H(+) = 5-amino-6-(5-phospho-D-ribosylamino)uracil + NH4(+). It participates in cofactor biosynthesis; riboflavin biosynthesis; 5-amino-6-(D-ribitylamino)uracil from GTP: step 2/4. Monofunctional pyrimidine deaminase involved in the riboflavin biosynthesis pathway. Also has a reductase domain that lacks catalytically essential substrate-binding residues. The chain is Riboflavin biosynthesis protein PYRD, chloroplastic (PYRD) from Zea mays (Maize).